Here is a 799-residue protein sequence, read N- to C-terminus: Ribonucleoside-diphosphate reductase large subunit (799 aa).

Substrate contacts are provided by residues threonine 192, 207 to 208, glycine 238, 408 to 412, and 612 to 616; these read SC, NLCAE, and PTAGT. Cysteine 208 and cysteine 424 form a disulfide bridge. The active-site Proton acceptor is the asparagine 408. Residue cysteine 410 is the Cysteine radical intermediate of the active site. The Proton acceptor role is filled by glutamate 412. A disordered region spans residues 765-799; that stretch reads PDSGDGVGGYKGGDEEPRSPEHAQCESPDRCLSCQ. Residues 776 to 793 are compositionally biased toward basic and acidic residues; sequence GGDEEPRSPEHAQCESPD.

The protein belongs to the ribonucleoside diphosphate reductase large chain family. Heterotetramer composed of a homodimer of the large subunit (R1) and a homodimer of the small subunit (R2). Larger multisubunit protein complex are also active, composed of (R1)n(R2)n.

The enzyme catalyses a 2'-deoxyribonucleoside 5'-diphosphate + [thioredoxin]-disulfide + H2O = a ribonucleoside 5'-diphosphate + [thioredoxin]-dithiol. In terms of biological role, ribonucleoside-diphosphate reductase holoenzyme provides the precursors necessary for viral DNA synthesis. Allows virus growth in non-dividing cells, as well as reactivation from latency in infected hosts. Catalyzes the biosynthesis of deoxyribonucleotides from the corresponding ribonucleotides. This is Ribonucleoside-diphosphate reductase large subunit from Equine herpesvirus 2 (strain 86/87) (EHV-2).